The primary structure comprises 132 residues: Small ribosomal subunit protein uS8c (132 aa).

It belongs to the universal ribosomal protein uS8 family. As to quaternary structure, part of the 30S ribosomal subunit.

Its subcellular location is the plastid. The protein localises to the chloroplast. Functionally, one of the primary rRNA binding proteins, it binds directly to 16S rRNA central domain where it helps coordinate assembly of the platform of the 30S subunit. The polypeptide is Small ribosomal subunit protein uS8c (rps8) (Physcomitrium patens (Spreading-leaved earth moss)).